The primary structure comprises 197 residues: Small ribosomal subunit protein uS5 (197 aa).

A disordered region spans residues 1–27 (MAEREQRGGRDQRGGGRERKEREERDS). An S5 DRBM domain is found at 29–92 (FVDKLVHINR…ESAKRNLTRV (64 aa)).

It belongs to the universal ribosomal protein uS5 family. Part of the 30S ribosomal subunit. Contacts proteins S4 and S8.

Functionally, with S4 and S12 plays an important role in translational accuracy. In terms of biological role, located at the back of the 30S subunit body where it stabilizes the conformation of the head with respect to the body. This chain is Small ribosomal subunit protein uS5, found in Bradyrhizobium diazoefficiens (strain JCM 10833 / BCRC 13528 / IAM 13628 / NBRC 14792 / USDA 110).